Consider the following 220-residue polypeptide: Protein Syd (220 aa).

This sequence belongs to the Syd family.

The protein localises to the cell inner membrane. Functionally, interacts with the SecY protein in vivo. May bind preferentially to an uncomplexed state of SecY, thus functioning either as a chelating agent for excess SecY in the cell or as a regulatory factor that negatively controls the translocase function. This is Protein Syd from Shewanella loihica (strain ATCC BAA-1088 / PV-4).